We begin with the raw amino-acid sequence, 472 residues long: Ribosomal protein uS12 methylthiotransferase RimO (472 aa).

Positions 33–143 (NRIGFVSLGC…VLKHVHKYVP (111 aa)) constitute an MTTase N-terminal domain. [4Fe-4S] cluster contacts are provided by C42, C78, C107, C175, C179, and C182. The Radical SAM core domain maps to 161 to 398 (LTPKHYAYLK…MELQAEISAE (238 aa)). Residues 401–467 (ARFVGRTLDI…EHDLWAEVVD (67 aa)) enclose the TRAM domain.

Belongs to the methylthiotransferase family. RimO subfamily. It depends on [4Fe-4S] cluster as a cofactor.

It localises to the cytoplasm. The enzyme catalyses L-aspartate(89)-[ribosomal protein uS12]-hydrogen + (sulfur carrier)-SH + AH2 + 2 S-adenosyl-L-methionine = 3-methylsulfanyl-L-aspartate(89)-[ribosomal protein uS12]-hydrogen + (sulfur carrier)-H + 5'-deoxyadenosine + L-methionine + A + S-adenosyl-L-homocysteine + 2 H(+). Its function is as follows. Catalyzes the methylthiolation of an aspartic acid residue of ribosomal protein uS12. This chain is Ribosomal protein uS12 methylthiotransferase RimO, found in Shewanella putrefaciens (strain CN-32 / ATCC BAA-453).